Here is a 290-residue protein sequence, read N- to C-terminus: Membrane protein insertase YidC (290 aa).

The first 19 residues, 1-19 (MKKKALLPLFLGIMVFLAG), serve as a signal peptide directing secretion. Residue Cys-20 is the site of N-palmitoyl cysteine attachment. Residue Cys-20 is the site of S-diacylglycerol cysteine attachment. Helical transmembrane passes span 56–76 (YGLA…PFML), 134–154 (MLGC…YFVL), 176–196 (PDIW…YVSS), 207–224 (GYMM…ISLS), and 229–251 (LGLY…NIYY). The tract at residues 270 to 290 (HNGGSNKKGKNTQVVSKKKKK) is disordered.

This sequence belongs to the OXA1/ALB3/YidC family. Type 2 subfamily.

The protein resides in the cell membrane. In terms of biological role, required for the insertion and/or proper folding and/or complex formation of integral membrane proteins into the membrane. Involved in integration of membrane proteins that insert both dependently and independently of the Sec translocase complex, as well as at least some lipoproteins. The chain is Membrane protein insertase YidC from Staphylococcus aureus (strain Mu3 / ATCC 700698).